The following is a 253-amino-acid chain: uncharacterized protein (253 aa).

The protein belongs to the DcsA family.

This is an uncharacterized protein from Bacillus subtilis (strain 168).